The following is a 116-amino-acid chain: Ribonuclease P protein component (116 aa).

The protein belongs to the RnpA family. Consists of a catalytic RNA component (M1 or rnpB) and a protein subunit.

It carries out the reaction Endonucleolytic cleavage of RNA, removing 5'-extranucleotides from tRNA precursor.. Its function is as follows. RNaseP catalyzes the removal of the 5'-leader sequence from pre-tRNA to produce the mature 5'-terminus. It can also cleave other RNA substrates such as 4.5S RNA. The protein component plays an auxiliary but essential role in vivo by binding to the 5'-leader sequence and broadening the substrate specificity of the ribozyme. The polypeptide is Ribonuclease P protein component (Geobacillus sp. (strain WCH70)).